A 206-amino-acid polypeptide reads, in one-letter code: Small ribosomal subunit protein uS4 (206 aa).

The region spanning 96 to 157 (SRLDNVVYRM…KAKNQARIQN (62 aa)) is the S4 RNA-binding domain.

It belongs to the universal ribosomal protein uS4 family. Part of the 30S ribosomal subunit. Contacts protein S5. The interaction surface between S4 and S5 is involved in control of translational fidelity.

In terms of biological role, one of the primary rRNA binding proteins, it binds directly to 16S rRNA where it nucleates assembly of the body of the 30S subunit. With S5 and S12 plays an important role in translational accuracy. The chain is Small ribosomal subunit protein uS4 from Chromohalobacter salexigens (strain ATCC BAA-138 / DSM 3043 / CIP 106854 / NCIMB 13768 / 1H11).